The sequence spans 115 residues: Large ribosomal subunit protein bL19 (115 aa).

This sequence belongs to the bacterial ribosomal protein bL19 family.

In terms of biological role, this protein is located at the 30S-50S ribosomal subunit interface and may play a role in the structure and function of the aminoacyl-tRNA binding site. The protein is Large ribosomal subunit protein bL19 of Lawsonia intracellularis (strain PHE/MN1-00).